The following is a 74-amino-acid chain: Kappa-scoloptoxin(07)-Ssm2d (74 aa).

Residues Met-1–Gly-19 form the signal peptide. A propeptide spanning residues Ala-20–Asn-41 is cleaved from the precursor.

It belongs to the scoloptoxin-07 family. In terms of processing, contains 3 disulfide bonds. In terms of tissue distribution, expressed by the venom gland.

It is found in the secreted. Functionally, inhibits voltage-gated potassium channels. In Scolopendra mutilans (Chinese red-headed centipede), this protein is Kappa-scoloptoxin(07)-Ssm2d.